The following is a 473-amino-acid chain: High-affinity proline transporter PutP (473 aa).

12 helical membrane passes run 32 to 52 (LSAGAADMSGWLLMGLPGAMF), 56 to 76 (LSGAWIVIGLCLGAWANWLYV), 114 to 134 (IVILVFFTFYVSSGMVSGGVL), 146 to 166 (GLWIVTGVVVAYTLFGGFLAV), 171 to 191 (FVQGIIMFAALILVPIVTFFH), 218 to 238 (VLGIISLFAWGLGYFGQPHII), 256 to 276 (IGMGWMILSAVGAVLTGLGGI), 299 to 319 (ILFHPIITGFLISAILAAIMS), 350 to 370 (LVFLGRLAVLAVSIVALVLAW), 376 to 396 (ILGLVSYAWAGFGASFGPVVL), 408 to 428 (GALAGMIVGAATVIIWANAGL), and 431 to 451 (FLYEMIPGFAASLLSVFFVSI).

It belongs to the sodium:solute symporter (SSF) (TC 2.A.21) family.

The protein localises to the cell membrane. It catalyses the reaction L-proline(in) + Na(+)(in) = L-proline(out) + Na(+)(out). Catalyzes the high-affinity uptake of extracellular proline. Important for the use of proline as a sole carbon and energy source or a sole nitrogen source. This chain is High-affinity proline transporter PutP, found in Bacillus subtilis (strain 168).